The chain runs to 266 residues: Non-structural maintenance of chromosomes element 1 homolog (266 aa).

Residues M1 to A102 are interaction with NSMCE3. An RING-type; atypical zinc finger spans residues C191–N232. Residues E246–H266 are disordered. Residues S256–H266 are compositionally biased toward basic residues.

Belongs to the NSE1 family. As to quaternary structure, component of the SMC5-SMC6 complex which consists at least of SMC5, SMC6, NSMCE2, NSMCE1, NSMCE4A or EID3 and NSMCE3. NSMCE1, NSMCE4A or EID3 and NSMCE3 probably form a subcomplex that bridges the head domains of the SMC5-SMC6 heterodimer. Interacts with NSMCE3. Ubiquitinated.

It is found in the nucleus. The protein resides in the chromosome. The protein localises to the telomere. The catalysed reaction is S-ubiquitinyl-[E2 ubiquitin-conjugating enzyme]-L-cysteine + [acceptor protein]-L-lysine = [E2 ubiquitin-conjugating enzyme]-L-cysteine + N(6)-ubiquitinyl-[acceptor protein]-L-lysine.. Its function is as follows. RING-type zinc finger-containing E3 ubiquitin ligase that assembles with melanoma antigen protein (MAGE) to catalyze the direct transfer of ubiquitin from E2 ubiquitin-conjugating enzyme to a specific substrate. Within MAGE-RING ubiquitin ligase complex, MAGE stimulates and specifies ubiquitin ligase activity likely through recruitment and/or stabilization of the E2 ubiquitin-conjugating enzyme at the E3:substrate complex. Involved in maintenance of genome integrity, DNA damage response and DNA repair. NSMCE3/MAGEG1 and NSMCE1 ubiquitin ligase are components of SMC5-SMC6 complex and may positively regulate homologous recombination-mediated DNA repair. The chain is Non-structural maintenance of chromosomes element 1 homolog (Nsmce1) from Rattus norvegicus (Rat).